A 108-amino-acid chain; its full sequence is Class I hydrophobin eas (108 aa).

An N-terminal signal peptide occupies residues 1-26 (MQFTSVFTILAIAMTAAAAPAEVVPR). 4 disulfides stabilise this stretch: Cys-35–Cys-86, Cys-44–Cys-80, Cys-45–Cys-71, and Cys-87–Cys-106.

This sequence belongs to the fungal hydrophobin family. As to quaternary structure, self-assembles to form functional amyloid fibrils called rodlets. Self-assembly into fibrillar rodlets occurs spontaneously at hydrophobic:hydrophilic interfaces and the rodlets further associate laterally to form amphipathic monolayers.

The protein localises to the secreted. It is found in the spore wall. Aerial growth, conidiation, and dispersal of filamentous fungi in the environment rely upon a capability of their secreting small amphipathic proteins called hydrophobins (HPBs) with low sequence identity. Class I can self-assemble into an outermost layer of rodlet bundles on aerial cell surfaces, conferring cellular hydrophobicity that supports fungal growth, development and dispersal; whereas class II form highly ordered films at water-air interfaces through intermolecular interactions but contribute nothing to the rodlet structure. Eas is a class I hydrophobin that forms functional amyloid fibrils called rodlets that facilitate spore formation and dispersal. The chain is Class I hydrophobin eas from Neurospora crassa (strain ATCC 24698 / 74-OR23-1A / CBS 708.71 / DSM 1257 / FGSC 987).